The sequence spans 287 residues: 4-hydroxybenzoate octaprenyltransferase (287 aa).

5 consecutive transmembrane segments (helical) span residues 35–55 (FAAG…GVVV), 96–116 (LFGV…PLVV), 211–231 (IIAA…MLAG), 235–255 (IYGL…KLIY), and 262–282 (CFTA…ALTL).

This sequence belongs to the UbiA prenyltransferase family. It depends on Mg(2+) as a cofactor.

Its subcellular location is the cell inner membrane. The catalysed reaction is all-trans-octaprenyl diphosphate + 4-hydroxybenzoate = 4-hydroxy-3-(all-trans-octaprenyl)benzoate + diphosphate. The protein operates within cofactor biosynthesis; ubiquinone biosynthesis. In terms of biological role, catalyzes the prenylation of para-hydroxybenzoate (PHB) with an all-trans polyprenyl group. Mediates the second step in the final reaction sequence of ubiquinone-8 (UQ-8) biosynthesis, which is the condensation of the polyisoprenoid side chain with PHB, generating the first membrane-bound Q intermediate 3-octaprenyl-4-hydroxybenzoate. In Shewanella halifaxensis (strain HAW-EB4), this protein is 4-hydroxybenzoate octaprenyltransferase.